A 64-amino-acid polypeptide reads, in one-letter code: SPbeta prophage-derived uncharacterized protein YoqI (64 aa).

This is SPbeta prophage-derived uncharacterized protein YoqI (yoqI) from Bacillus subtilis (strain 168).